We begin with the raw amino-acid sequence, 732 residues long: Coagulation factor XIII A chain (732 aa).

The segment at 1 to 26 (MSDTPASTFGGRRAVPPNNSNAAEVD) is disordered. Serine 2 carries the post-translational modification N-acetylserine. A propeptide spans 2-38 (SDTPASTFGGRRAVPPNNSNAAEVDLPTEELQGLVPR) (activation peptide). Active-site residues include cysteine 315, histidine 374, and aspartate 397. Ca(2+) is bound by residues asparagine 437, aspartate 439, glutamate 486, and glutamate 491. The N-linked (GlcNAc...) asparagine glycan is linked to asparagine 614.

This sequence belongs to the transglutaminase superfamily. Transglutaminase family. Tetramer of two A chains (F13A1) and two B (F13B) chains. Ca(2+) is required as a cofactor. Post-translationally, the activation peptide is released by thrombin.

The protein resides in the cytoplasm. Its subcellular location is the secreted. The enzyme catalyses L-glutaminyl-[protein] + L-lysyl-[protein] = [protein]-L-lysyl-N(6)-5-L-glutamyl-[protein] + NH4(+). Factor XIII is activated by thrombin and calcium ion to a transglutaminase that catalyzes the formation of gamma-glutamyl-epsilon-lysine cross-links between fibrin chains, thus stabilizing the fibrin clot. Also cross-link alpha-2-plasmin inhibitor, or fibronectin, to the alpha chains of fibrin. The chain is Coagulation factor XIII A chain (F13a1) from Mus musculus (Mouse).